Here is a 107-residue protein sequence, read N- to C-terminus: UPF0145 protein ESA_02470 (107 aa).

It belongs to the UPF0145 family.

The polypeptide is UPF0145 protein ESA_02470 (Cronobacter sakazakii (strain ATCC BAA-894) (Enterobacter sakazakii)).